The following is a 164-amino-acid chain: Aspartate carbamoyltransferase regulatory chain (164 aa).

C116, C121, C146, and C149 together coordinate Zn(2+).

The protein belongs to the PyrI family. Contains catalytic and regulatory chains. The cofactor is Zn(2+).

In terms of biological role, involved in allosteric regulation of aspartate carbamoyltransferase. The sequence is that of Aspartate carbamoyltransferase regulatory chain from Staphylothermus marinus (strain ATCC 43588 / DSM 3639 / JCM 9404 / F1).